We begin with the raw amino-acid sequence, 120 residues long: Phosphoribosyl-AMP cyclohydrolase (120 aa).

Residue Asp75 participates in Mg(2+) binding. Residue Cys76 coordinates Zn(2+). Residues Asp77 and Asp79 each contribute to the Mg(2+) site. Zn(2+)-binding residues include Cys92 and Cys99.

The protein belongs to the PRA-CH family. Homodimer. Mg(2+) is required as a cofactor. The cofactor is Zn(2+).

It localises to the cytoplasm. The catalysed reaction is 1-(5-phospho-beta-D-ribosyl)-5'-AMP + H2O = 1-(5-phospho-beta-D-ribosyl)-5-[(5-phospho-beta-D-ribosylamino)methylideneamino]imidazole-4-carboxamide. Its pathway is amino-acid biosynthesis; L-histidine biosynthesis; L-histidine from 5-phospho-alpha-D-ribose 1-diphosphate: step 3/9. In terms of biological role, catalyzes the hydrolysis of the adenine ring of phosphoribosyl-AMP. In Haloarcula marismortui (strain ATCC 43049 / DSM 3752 / JCM 8966 / VKM B-1809) (Halobacterium marismortui), this protein is Phosphoribosyl-AMP cyclohydrolase.